The sequence spans 555 residues: Potassium-transporting ATPase potassium-binding subunit (555 aa).

10 helical membrane passes run 2-22 (IWVA…PTGI), 60-80 (QYAL…YFIF), 130-150 (IGIT…VMAF), 173-193 (VFLP…VPQT), 246-266 (MSNI…PFTY), 278-298 (ILFV…TTSE), 374-394 (AGFV…GLMV), 412-432 (LIAV…ALAL), 483-503 (LVMF…AASL), and 525-545 (GIFI…MLVL).

It belongs to the KdpA family. In terms of assembly, the system is composed of three essential subunits: KdpA, KdpB and KdpC.

Its subcellular location is the cell membrane. Its function is as follows. Part of the high-affinity ATP-driven potassium transport (or Kdp) system, which catalyzes the hydrolysis of ATP coupled with the electrogenic transport of potassium into the cytoplasm. This subunit binds the extracellular potassium ions and delivers the ions to the membrane domain of KdpB through an intramembrane tunnel. The sequence is that of Potassium-transporting ATPase potassium-binding subunit from Bacillus thuringiensis (strain Al Hakam).